Consider the following 160-residue polypeptide: Transcriptional regulator MraZ (160 aa).

2 consecutive SpoVT-AbrB domains span residues 5-50 and 93-136; these read NFET…DGGY and AVEC…SQAE.

The protein belongs to the MraZ family. As to quaternary structure, forms oligomers.

Its subcellular location is the cytoplasm. It is found in the nucleoid. In Geotalea daltonii (strain DSM 22248 / JCM 15807 / FRC-32) (Geobacter daltonii), this protein is Transcriptional regulator MraZ.